Consider the following 407-residue polypeptide: MRQLLPGDTVWRNIRLATMDPQRQAPYGLVDNQALIVRGGHICDIVPETQLPVSGDNIHDMQGRLVTPGLIDCHTHLVFAGNRAAEWEQRLNGASYQHISAQGGGINATVSATRACAEETLYLLARERMMRLASEGVTLLEIKSGYGLELATEEKLLRVAAKLAAENAIDISPTLLAAHATPAEYRDDPDGYITLVCETMIPQLWQKGLFDAVDLFCESVGFNVAQSERVLQTAKALGIPVKGHVEQLSLLGGAQLVSRYQGLSADHIEYLDEAGVAAMRDGGTVGVLLPGAFYFLRETQRPPVELLRRYQVPVAVASDFNPGTSPFCSLHLAMNMACVQFGLTPEEAWAGVTRHAARALGRQATHGQIRAGYRADFVVWDAEQPVEIVYEPGRNPLYQRVYRGKIS.

Residues H74 and H76 each coordinate Fe(3+). 2 residues coordinate Zn(2+): H74 and H76. The 4-imidazolone-5-propanoate site is built by R83, Y146, and H179. Residue Y146 coordinates N-formimidoyl-L-glutamate. Fe(3+) is bound at residue H244. H244 lines the Zn(2+) pocket. Residue Q247 coordinates 4-imidazolone-5-propanoate. D319 is a Fe(3+) binding site. D319 is a Zn(2+) binding site. Positions 321 and 323 each coordinate N-formimidoyl-L-glutamate. T324 provides a ligand contact to 4-imidazolone-5-propanoate.

This sequence belongs to the metallo-dependent hydrolases superfamily. HutI family. Zn(2+) serves as cofactor. Fe(3+) is required as a cofactor.

The protein resides in the cytoplasm. The enzyme catalyses 4-imidazolone-5-propanoate + H2O = N-formimidoyl-L-glutamate. It functions in the pathway amino-acid degradation; L-histidine degradation into L-glutamate; N-formimidoyl-L-glutamate from L-histidine: step 3/3. In terms of biological role, catalyzes the hydrolytic cleavage of the carbon-nitrogen bond in imidazolone-5-propanoate to yield N-formimidoyl-L-glutamate. It is the third step in the universal histidine degradation pathway. This Salmonella schwarzengrund (strain CVM19633) protein is Imidazolonepropionase.